The chain runs to 516 residues: MLNAAGGAGCDPSSPTATSPMRILILLLAAALAGAFTLFAFAPYRLFWLMPLCLAALVELLQREPRRAFWLGYAWGLGAYVSNFRWIYDSLHDVAGLPAWIAAPLVLLLPAYLALYPGLASWLACRIDPRPGVRWLLAFPAAWELGEWLRGWVMTGFPWGAAGYSQITESPLAGYAPLGGIHLVNYLVALSAAALAMLARAGMRQRIGILIAAALAWGSGVWLRDIEWTTPAGKPITVALAQGNIAQELKWSPENLENSLLTYYRQVAMTRADLMILPETALPLFLDDLPSGYLSMMRGEASRAGMALASGIPRRTDDGRGYLNSVVALSDPKMPYYAKDHLVPFGEFVPLPGLIGWIYQHMDMPLSGFTRGGADQPPLTLAGQKVAFNVCYEDSFGEELIGPASRAGMLANVSNLAWFGKSEAMSQHLQLSQARSLETGRYMLRATNNGMTAIIRPDGEISAVAAPFTAQVLTGFAQSRQGLTPYMRFGNLPVVLGCGALLLLALLLGWRRRGQH.

A run of 5 helical transmembrane segments spans residues 23-43, 68-88, 94-114, 135-155, and 178-198; these read ILIL…AFAP, AFWL…RWIY, VAGL…AYLA, WLLA…WVMT, and LGGI…LAML. The 241-residue stretch at 241-481 folds into the CN hydrolase domain; the sequence is AQGNIAQELK…VLTGFAQSRQ (241 aa). Glutamate 279 functions as the Proton acceptor in the catalytic mechanism. Residue lysine 339 is part of the active site. Residue cysteine 391 is the Nucleophile of the active site. The helical transmembrane segment at 489-509 threads the bilayer; it reads FGNLPVVLGCGALLLLALLLG.

This sequence belongs to the CN hydrolase family. Apolipoprotein N-acyltransferase subfamily.

It localises to the cell inner membrane. It carries out the reaction N-terminal S-1,2-diacyl-sn-glyceryl-L-cysteinyl-[lipoprotein] + a glycerophospholipid = N-acyl-S-1,2-diacyl-sn-glyceryl-L-cysteinyl-[lipoprotein] + a 2-acyl-sn-glycero-3-phospholipid + H(+). It functions in the pathway protein modification; lipoprotein biosynthesis (N-acyl transfer). In terms of biological role, catalyzes the phospholipid dependent N-acylation of the N-terminal cysteine of apolipoprotein, the last step in lipoprotein maturation. This is Apolipoprotein N-acyltransferase from Chromobacterium violaceum (strain ATCC 12472 / DSM 30191 / JCM 1249 / CCUG 213 / NBRC 12614 / NCIMB 9131 / NCTC 9757 / MK).